We begin with the raw amino-acid sequence, 270 residues long: Imidazoleglycerol-phosphate dehydratase 1, chloroplastic (270 aa).

Residues 1 to 62 constitute a chloroplast transit peptide; that stretch reads MELSSASAIL…QSQLRQSISC (62 aa). Position 63 is an N-acetylserine (Ser-63). Substrate contacts are provided by residues Glu-84, 110–118, 136–140, Arg-162, and Arg-184; these read HMLDQLASH and HHTNE. Residues His-110, His-136, His-137, and Glu-140 each coordinate Mn(2+). Mn(2+) is bound by residues His-208, His-232, His-233, and Glu-236. Residues 232-240 and 262-264 each bind substrate; these read HHIIEATFK and SSK. A disordered region spans residues 250-270; it reads TETDPRRGGTIPSSKGVLSRS.

It belongs to the imidazoleglycerol-phosphate dehydratase family. Mn(2+) serves as cofactor.

The protein localises to the plastid. It is found in the chloroplast. It catalyses the reaction D-erythro-1-(imidazol-4-yl)glycerol 3-phosphate = 3-(imidazol-4-yl)-2-oxopropyl phosphate + H2O. Its pathway is amino-acid biosynthesis; L-histidine biosynthesis; L-histidine from 5-phospho-alpha-D-ribose 1-diphosphate: step 6/9. The chain is Imidazoleglycerol-phosphate dehydratase 1, chloroplastic from Arabidopsis thaliana (Mouse-ear cress).